A 320-amino-acid chain; its full sequence is Olfactory receptor 2W1 (320 aa).

At 1-25 the chain is on the extracellular side; it reads MDQSNYSSLHGFILLGFSNHPKMEM. A glycan (N-linked (GlcNAc...) asparagine) is linked at Asn-5. A helical transmembrane segment spans residues 26–49; the sequence is ILSGVVAIFYLITLVGNTAIILAS. Over 50–57 the chain is Cytoplasmic; the sequence is LLDSQLHT. A helical membrane pass occupies residues 58-79; that stretch reads PMYFFLRNLSFLDLCFTTSIIP. The Extracellular portion of the chain corresponds to 80 to 100; sequence QMLVNLWGPDKTISYVGCIIQ. Cysteines 97 and 189 form a disulfide. The helical transmembrane segment at 101-120 threads the bilayer; it reads LYVYMWLGSVECLLLAVMSY. The Cytoplasmic segment spans residues 121 to 139; it reads DRFTAICKPLHYFVVMNPH. The chain crosses the membrane as a helical span at residues 140 to 158; the sequence is LCLKMIIMIWSISLANSVV. At 159–195 the chain is on the extracellular side; that stretch reads LCTLTLNLPTCGNNILDHFLCELPALVKIACVDTTTV. The helical transmembrane segment at 196 to 219 threads the bilayer; the sequence is EMSVFALGIIIVLTPLILILISYG. Over 220 to 236 the chain is Cytoplasmic; the sequence is YIAKAVLRTKSKASQRK. Residues 237–259 traverse the membrane as a helical segment; sequence AMNTCGSHLTVVSMFYGTIIYMY. The Extracellular portion of the chain corresponds to 260 to 272; sequence LQPGNRASKDQGK. A helical membrane pass occupies residues 273–292; sequence FLTLFYTVITPSLNPLIYTL. Over 293-320 the chain is Cytoplasmic; the sequence is RNKDMKDALKKLMRFHHKSTKIKRNCKS.

Belongs to the G-protein coupled receptor 1 family.

Its subcellular location is the cell membrane. Odorant receptor. The polypeptide is Olfactory receptor 2W1 (OR2W1) (Homo sapiens (Human)).